The sequence spans 78 residues: Sec-independent protein translocase protein TatA (78 aa).

The chain crosses the membrane as a helical span at residues 4–21; the sequence is SFQHILILLVVVLLLFGR. The segment at 49 to 78 is disordered; that stretch reads TAKSDSIKTIDNTGKPTNVQANPQRQDSTV. The segment covering 57–78 has biased composition (polar residues); that stretch reads TIDNTGKPTNVQANPQRQDSTV.

Belongs to the TatA/E family. As to quaternary structure, the Tat system comprises two distinct complexes: a TatABC complex, containing multiple copies of TatA, TatB and TatC subunits, and a separate TatA complex, containing only TatA subunits. Substrates initially bind to the TatABC complex, which probably triggers association of the separate TatA complex to form the active translocon.

Its subcellular location is the cell inner membrane. Functionally, part of the twin-arginine translocation (Tat) system that transports large folded proteins containing a characteristic twin-arginine motif in their signal peptide across membranes. TatA could form the protein-conducting channel of the Tat system. This is Sec-independent protein translocase protein TatA from Afipia carboxidovorans (strain ATCC 49405 / DSM 1227 / KCTC 32145 / OM5) (Oligotropha carboxidovorans).